The primary structure comprises 152 residues: Ribosome maturation factor RimP (152 aa).

It belongs to the RimP family.

The protein resides in the cytoplasm. Functionally, required for maturation of 30S ribosomal subunits. This chain is Ribosome maturation factor RimP, found in Desulfatibacillum aliphaticivorans.